We begin with the raw amino-acid sequence, 361 residues long: Phosphoribosylformylglycinamidine cyclo-ligase (361 aa).

It belongs to the AIR synthase family.

Its subcellular location is the cytoplasm. It carries out the reaction 2-formamido-N(1)-(5-O-phospho-beta-D-ribosyl)acetamidine + ATP = 5-amino-1-(5-phospho-beta-D-ribosyl)imidazole + ADP + phosphate + H(+). It functions in the pathway purine metabolism; IMP biosynthesis via de novo pathway; 5-amino-1-(5-phospho-D-ribosyl)imidazole from N(2)-formyl-N(1)-(5-phospho-D-ribosyl)glycinamide: step 2/2. The sequence is that of Phosphoribosylformylglycinamidine cyclo-ligase from Bartonella quintana (strain Toulouse) (Rochalimaea quintana).